A 507-amino-acid polypeptide reads, in one-letter code: Steroid (22S)-hydroxylase (507 aa).

The chain crosses the membrane as a helical span at residues 12–32; that stretch reads LLFFLPYILLALLTFYTTTVA. Cys-444 contacts heme.

This sequence belongs to the cytochrome P450 family. It depends on heme as a cofactor.

It localises to the membrane. It catalyses the reaction a C27-steroid + reduced [NADPH--hemoprotein reductase] + O2 = a (22S)-22-hydroxy C27-steroid + oxidized [NADPH--hemoprotein reductase] + H2O + H(+). It carries out the reaction a C28-steroid + reduced [NADPH--hemoprotein reductase] + O2 = a (22S)-22-hydroxy C28-steroid + oxidized [NADPH--hemoprotein reductase] + H2O + H(+). The enzyme catalyses campesterol + reduced [NADPH--hemoprotein reductase] + O2 = (22S)-22-hydroxycampesterol + oxidized [NADPH--hemoprotein reductase] + H2O + H(+). The catalysed reaction is campestanol + reduced [NADPH--hemoprotein reductase] + O2 = 6-deoxycathasterone + oxidized [NADPH--hemoprotein reductase] + H2O + H(+). It functions in the pathway plant hormone biosynthesis; brassinosteroid biosynthesis. In terms of biological role, involved in reduction steps of the biosynthesis of plant campesterol-derivative steroids, ending to castasterone (CS) but missing brassinolide (BL). Catalyzes the conversion of campesterol (CR) to (22S)-22-hydroxycampesterol (22-OHCR, 22-hydroxyCR) and of campestanol (CN) to 6-deoxycathasterone (6-deoxoCT). This Brachypodium distachyon (Purple false brome) protein is Steroid (22S)-hydroxylase.